Reading from the N-terminus, the 188-residue chain is Putative CC-type chemokine FPV060 (188 aa).

Belongs to the intercrine beta (chemokine CC) family. Highly divergent.

This Fowlpox virus (strain NVSL) (FPV) protein is Putative CC-type chemokine FPV060.